Consider the following 70-residue polypeptide: uncharacterized protein (70 aa).

A helical transmembrane segment spans residues 50–70 (FYLLVFFIILWVSREAFFYLI).

The protein belongs to the M.jannaschii MJ0023/MJ0349/MJ1072/MJ1074/MJ1107/MJECL16 family.

The protein localises to the membrane. This is an uncharacterized protein from Methanocaldococcus jannaschii (strain ATCC 43067 / DSM 2661 / JAL-1 / JCM 10045 / NBRC 100440) (Methanococcus jannaschii).